Consider the following 207-residue polypeptide: MSYSGERDNLAPHMALVPMVIEQTSRGERSFDIYSRLLKERVIFLTGQVEDHMANLIVAQMLFLEAENPEKDIYLYINSPGGVITAGMSIYDTMQFIKPDVSTICMGQAASMGAFLLTAGAKGKRFCLPNSRVMIHQPLGGYQGQATDIEIHAREILKVKGRMNELMAHHTGQSLEQIERDTERDRFLSAPEAVEYGLVDSILTHRN.

Residue S111 is the Nucleophile of the active site. H136 is a catalytic residue.

Belongs to the peptidase S14 family. In terms of assembly, fourteen ClpP subunits assemble into 2 heptameric rings which stack back to back to give a disk-like structure with a central cavity, resembling the structure of eukaryotic proteasomes. Component of the ClpAP and ClpXP complexes.

The protein localises to the cytoplasm. It catalyses the reaction Hydrolysis of proteins to small peptides in the presence of ATP and magnesium. alpha-casein is the usual test substrate. In the absence of ATP, only oligopeptides shorter than five residues are hydrolyzed (such as succinyl-Leu-Tyr-|-NHMec, and Leu-Tyr-Leu-|-Tyr-Trp, in which cleavage of the -Tyr-|-Leu- and -Tyr-|-Trp bonds also occurs).. In terms of biological role, cleaves peptides in various proteins in a process that requires ATP hydrolysis. Has a chymotrypsin-like activity. Plays a major role in the degradation of misfolded proteins. The chain is ATP-dependent Clp protease proteolytic subunit from Salmonella enteritidis PT4 (strain P125109).